The primary structure comprises 207 residues: NAD(P)H-quinone oxidoreductase subunit K, chloroplastic (207 aa).

Residues cysteine 47, cysteine 48, cysteine 112, and cysteine 143 each coordinate [4Fe-4S] cluster.

The protein belongs to the complex I 20 kDa subunit family. As to quaternary structure, NDH is composed of at least 16 different subunits, 5 of which are encoded in the nucleus. [4Fe-4S] cluster serves as cofactor.

The protein localises to the plastid. Its subcellular location is the chloroplast thylakoid membrane. It catalyses the reaction a plastoquinone + NADH + (n+1) H(+)(in) = a plastoquinol + NAD(+) + n H(+)(out). It carries out the reaction a plastoquinone + NADPH + (n+1) H(+)(in) = a plastoquinol + NADP(+) + n H(+)(out). NDH shuttles electrons from NAD(P)H:plastoquinone, via FMN and iron-sulfur (Fe-S) centers, to quinones in the photosynthetic chain and possibly in a chloroplast respiratory chain. The immediate electron acceptor for the enzyme in this species is believed to be plastoquinone. Couples the redox reaction to proton translocation, and thus conserves the redox energy in a proton gradient. The sequence is that of NAD(P)H-quinone oxidoreductase subunit K, chloroplastic from Psilotum nudum (Whisk fern).